The sequence spans 213 residues: NADH-quinone oxidoreductase subunit I (213 aa).

2 consecutive 4Fe-4S ferredoxin-type domains span residues 74-103 and 113-142; these read RFIE…METS and GNYS…HGIE. Residues C83, C86, C89, C93, C122, C125, C128, and C132 each contribute to the [4Fe-4S] cluster site.

It belongs to the complex I 23 kDa subunit family. NDH-1 is composed of 14 different subunits. Subunits NuoA, H, J, K, L, M, N constitute the membrane sector of the complex. It depends on [4Fe-4S] cluster as a cofactor.

It localises to the cell inner membrane. The enzyme catalyses a quinone + NADH + 5 H(+)(in) = a quinol + NAD(+) + 4 H(+)(out). In terms of biological role, NDH-1 shuttles electrons from NADH, via FMN and iron-sulfur (Fe-S) centers, to quinones in the respiratory chain. The immediate electron acceptor for the enzyme in this species is believed to be ubiquinone. Couples the redox reaction to proton translocation (for every two electrons transferred, four hydrogen ions are translocated across the cytoplasmic membrane), and thus conserves the redox energy in a proton gradient. The polypeptide is NADH-quinone oxidoreductase subunit I (Campylobacter jejuni subsp. doylei (strain ATCC BAA-1458 / RM4099 / 269.97)).